A 491-amino-acid chain; its full sequence is GTPase Der (491 aa).

In terms of domain architecture, EngA-type G 1 spans 3–178 (AKIALVGRPN…EMRDLLPEED (176 aa)). Residues 9 to 16 (GRPNVGKS), 57 to 61 (DTGGI), and 130 to 133 (NKVD) contribute to the GTP site. The segment covering 198–224 (DAETEDGASASETEEDITEETVEDEPE) has biased composition (acidic residues). The segment at 198-225 (DAETEDGASASETEEDITEETVEDEPEA) is disordered. An EngA-type G 2 domain is found at 227 to 400 (LRLCMLGRPN…LAARIRRECS (174 aa)). Residues 233 to 240 (GRPNAGKS), 280 to 284 (DTAGV), and 345 to 348 (NKMD) contribute to the GTP site. The region spanning 401 to 485 (VRIPTGQLNR…PMRVHFRSSH (85 aa)) is the KH-like domain.

Belongs to the TRAFAC class TrmE-Era-EngA-EngB-Septin-like GTPase superfamily. EngA (Der) GTPase family. Associates with the 50S ribosomal subunit.

GTPase that plays an essential role in the late steps of ribosome biogenesis. The polypeptide is GTPase Der (Nitratidesulfovibrio vulgaris (strain ATCC 29579 / DSM 644 / CCUG 34227 / NCIMB 8303 / VKM B-1760 / Hildenborough) (Desulfovibrio vulgaris)).